Consider the following 182-residue polypeptide: Transcription termination/antitermination protein NusG (182 aa).

The 31-residue stretch at 131–161 (GEVVRVNDGPFADFNGTVEEVDYEKSRLKVS) folds into the KOW domain.

It belongs to the NusG family.

Functionally, participates in transcription elongation, termination and antitermination. This Vibrio cholerae serotype O1 (strain ATCC 39315 / El Tor Inaba N16961) protein is Transcription termination/antitermination protein NusG.